The sequence spans 502 residues: Maturase K (502 aa).

This sequence belongs to the intron maturase 2 family. MatK subfamily.

It is found in the plastid. The protein localises to the chloroplast. Functionally, usually encoded in the trnK tRNA gene intron. Probably assists in splicing its own and other chloroplast group II introns. The sequence is that of Maturase K from Brassica oleracea (Wild cabbage).